The sequence spans 190 residues: Elongation factor P 2 (190 aa).

This sequence belongs to the elongation factor P family.

Its subcellular location is the cytoplasm. It participates in protein biosynthesis; polypeptide chain elongation. In terms of biological role, involved in peptide bond synthesis. Stimulates efficient translation and peptide-bond synthesis on native or reconstituted 70S ribosomes in vitro. Probably functions indirectly by altering the affinity of the ribosome for aminoacyl-tRNA, thus increasing their reactivity as acceptors for peptidyl transferase. In Chlamydia caviae (strain ATCC VR-813 / DSM 19441 / 03DC25 / GPIC) (Chlamydophila caviae), this protein is Elongation factor P 2 (efp2).